The chain runs to 780 residues: ATP-dependent 6-phosphofructokinase, muscle type (780 aa).

Position 2 is an N-acetylthreonine (threonine 2). Residues 2-390 (THEEHHAAKT…NWEVYKLLAH (389 aa)) are N-terminal catalytic PFK domain 1. ATP is bound by residues glycine 25, 88-89 (RC), and 118-121 (GDGS). A Mg(2+)-binding site is contributed by aspartate 119. Serine 133 is modified (phosphoserine). Substrate-binding positions include 164 to 166 (SID), arginine 201, 208 to 210 (MGR), glutamate 264, arginine 292, and 298 to 301 (HVQR). Aspartate 166 serves as the catalytic Proton acceptor. At serine 377 the chain carries Phosphoserine. An interdomain linker region spans residues 391 to 401 (VRPPVSKSGSH). The C-terminal regulatory PFK domain 2 stretch occupies residues 402-780 (TVAVMNVGAP…TRKRSGEGAV (379 aa)). Beta-D-fructose 2,6-bisphosphate contacts are provided by residues arginine 471 and 528 to 532 (TVSNN). Serine 530 carries an O-linked (GlcNAc) serine glycan. An N6-(2-hydroxyisobutyryl)lysine modification is found at lysine 557. Residues arginine 566, 573-575 (MGG), glutamate 629, arginine 655, and 661-664 (HMQQ) contribute to the beta-D-fructose 2,6-bisphosphate site. Serine 667 is modified (phosphoserine). Arginine 735 serves as a coordination point for beta-D-fructose 2,6-bisphosphate. A Phosphoserine modification is found at serine 775.

Belongs to the phosphofructokinase type A (PFKA) family. ATP-dependent PFK group I subfamily. Eukaryotic two domain clade 'E' sub-subfamily. As to quaternary structure, homo- and heterotetramers. Phosphofructokinase (PFK) enzyme functions as a tetramer composed of different combinations of 3 types of subunits, called PFKM (M), PFKL (L) and PFKP (P). The composition of the PFK tetramer differs according to the tissue type it is present in. The kinetic and regulatory properties of the tetrameric enzyme are dependent on the subunit composition, hence can vary across tissues. Interacts (via C-terminus) with HK1 (via N-terminal spermatogenic cell-specific region). It depends on Mg(2+) as a cofactor. Post-translationally, glcNAcylation decreases enzyme activity.

The protein localises to the cytoplasm. It catalyses the reaction beta-D-fructose 6-phosphate + ATP = beta-D-fructose 1,6-bisphosphate + ADP + H(+). It functions in the pathway carbohydrate degradation; glycolysis; D-glyceraldehyde 3-phosphate and glycerone phosphate from D-glucose: step 3/4. Allosterically activated by ADP, AMP, or fructose 2,6-bisphosphate, and allosterically inhibited by ATP or citrate. Functionally, catalyzes the phosphorylation of D-fructose 6-phosphate to fructose 1,6-bisphosphate by ATP, the first committing step of glycolysis. The polypeptide is ATP-dependent 6-phosphofructokinase, muscle type (PFKM) (Macaca fascicularis (Crab-eating macaque)).